Reading from the N-terminus, the 119-residue chain is NADH-quinone oxidoreductase subunit A (119 aa).

3 helical membrane-spanning segments follow: residues Val-9–Val-29, Leu-63–Val-83, and Val-88–Ala-108.

This sequence belongs to the complex I subunit 3 family. NDH-1 is composed of 14 different subunits. Subunits NuoA, H, J, K, L, M, N constitute the membrane sector of the complex.

Its subcellular location is the cell inner membrane. The enzyme catalyses a quinone + NADH + 5 H(+)(in) = a quinol + NAD(+) + 4 H(+)(out). In terms of biological role, NDH-1 shuttles electrons from NADH, via FMN and iron-sulfur (Fe-S) centers, to quinones in the respiratory chain. The immediate electron acceptor for the enzyme in this species is believed to be ubiquinone. Couples the redox reaction to proton translocation (for every two electrons transferred, four hydrogen ions are translocated across the cytoplasmic membrane), and thus conserves the redox energy in a proton gradient. The polypeptide is NADH-quinone oxidoreductase subunit A (Paracidovorax citrulli (strain AAC00-1) (Acidovorax citrulli)).